Consider the following 798-residue polypeptide: Cold shock domain-containing protein E1 (798 aa).

Residues 26 to 87 form the CSD 1 domain; that stretch reads ETGVIEKLLT…RTGKPIAIKL (62 aa). Position 81 is an N6-acetyllysine (Lys-81). A Glycyl lysine isopeptide (Lys-Gly) (interchain with G-Cter in SUMO2) cross-link involves residue Lys-91. Ser-123 bears the Phosphoserine mark. One can recognise a CSD 2; truncated domain in the interval 136-179; sequence VFYLTYTSEDVEGNVQLETGDKINFVIDNNKHTGAVSARNIMLL. Residues 186–245 enclose the CSD 3 domain; it reads YQGVVCAMKEAFGFIERGDVVKEIFFHYSEFKGDLETLQPGDDVEFTIKDRNGKEVATDV. Ser-276 bears the Phosphoserine mark. The CSD 4; truncated domain maps to 297-337; it reads LPFGDKDTKSKVTLLEGDHVRFNISTDRRDKLERATNIEVL. CSD domains follow at residues 349-410 and 447-507; these read EMGV…AIRI and NKGK…ATCV. A Phosphoserine modification is found at Ser-514. Residues 519–579 enclose the CSD 7 domain; sequence LLGYVATLKD…KGNKVSAEKV (61 aa). Ser-584 carries the phosphoserine modification. CSD domains lie at 610 to 670 and 674 to 735; these read PTQI…AYNI and RRAT…ACNV. Residues 748-789 enclose the SUZ-C domain; the sequence is PRPDRLVNRLKNITLDDASAPRLMVLRQPRGPDNSMGFGAER. The residue at position 761 (Thr-761) is a Phosphothreonine.

This sequence belongs to the UNR family. In terms of assembly, component of a multi subunit autoregulatory ribonucleoprotein complex (ARC), at least composed of IGF2BP1, PABPC1 and CSDE1. Interacts with STRAP. Part of a complex associated with the FOS mCRD domain and consisting of PABPC1, PAIP1, HNRPD and SYNCRIP. The interaction with PABPC1 is direct and RNA-independent. Interacts with EIF4ENIF1/4E-T.

Its subcellular location is the cytoplasm. It localises to the stress granule. The protein resides in the P-body. Functionally, RNA-binding protein involved in translationally coupled mRNA turnover. Implicated with other RNA-binding proteins in the cytoplasmic deadenylation/translational and decay interplay of the FOS mRNA mediated by the major coding-region determinant of instability (mCRD) domain. Required for efficient formation of stress granules. The sequence is that of Cold shock domain-containing protein E1 from Rattus norvegicus (Rat).